We begin with the raw amino-acid sequence, 433 residues long: L-2-hydroxyglutarate dehydrogenase, mitochondrial (433 aa).

It belongs to the L2HGDH family. Requires FAD as cofactor.

It is found in the mitochondrion. It carries out the reaction (S)-2-hydroxyglutarate + A = 2-oxoglutarate + AH2. This chain is L-2-hydroxyglutarate dehydrogenase, mitochondrial, found in Caenorhabditis elegans.